The sequence spans 289 residues: Metal-staphylopine import system permease protein CntC (289 aa).

A run of 5 helical transmembrane segments spans residues 13–33 (AVIALGIIVLYVFLGLAAPLV), 77–97 (LLYVFVALFVSVLIGSILGFL), 115–135 (VMLAFPSYVVTLALIALFGMG), 194–214 (IAIISSSSMCSMILQISGFSF), and 249–269 (IAIVIIVMAFNFLSDALQIAI). The ABC transmembrane type-1 domain occupies 73–262 (IRPSLLYVFV…IIVMAFNFLS (190 aa)).

It belongs to the binding-protein-dependent transport system permease family. The complex is composed of two ATP-binding proteins (CntD and CntF), two transmembrane proteins (CntB and CntC) and a solute-binding protein (CntA).

Its subcellular location is the cell membrane. Nickel/cobalt import is reduced in the presence of zinc. Its function is as follows. Part of the ABC transporter complex CntABCDF (Opp1) involved in the uptake of metal in complex with the metallophore staphylopine (StP). Involved in the import of divalent metals ions such as nickel, cobalt and zinc. Probably responsible for the translocation of the substrate across the membrane. Plays a major role in nickel/cobalt import in zinc-depleted conditions. Contributes to virulence. Required for full urease activity in vitro. This Staphylococcus aureus (strain NCTC 8325 / PS 47) protein is Metal-staphylopine import system permease protein CntC.